We begin with the raw amino-acid sequence, 223 residues long: Small ribosomal subunit protein uS3 (223 aa).

In terms of domain architecture, KH type-2 spans V39–R107.

It belongs to the universal ribosomal protein uS3 family. Part of the 30S ribosomal subunit. Forms a tight complex with proteins S10 and S14.

Functionally, binds the lower part of the 30S subunit head. Binds mRNA in the 70S ribosome, positioning it for translation. The chain is Small ribosomal subunit protein uS3 from Francisella tularensis subsp. holarctica (strain FTNF002-00 / FTA).